The following is a 215-amino-acid chain: ATP phosphoribosyltransferase (215 aa).

It belongs to the ATP phosphoribosyltransferase family. Short subfamily. Heteromultimer composed of HisG and HisZ subunits.

The protein resides in the cytoplasm. It carries out the reaction 1-(5-phospho-beta-D-ribosyl)-ATP + diphosphate = 5-phospho-alpha-D-ribose 1-diphosphate + ATP. Its pathway is amino-acid biosynthesis; L-histidine biosynthesis; L-histidine from 5-phospho-alpha-D-ribose 1-diphosphate: step 1/9. Functionally, catalyzes the condensation of ATP and 5-phosphoribose 1-diphosphate to form N'-(5'-phosphoribosyl)-ATP (PR-ATP). Has a crucial role in the pathway because the rate of histidine biosynthesis seems to be controlled primarily by regulation of HisG enzymatic activity. The sequence is that of ATP phosphoribosyltransferase from Gloeothece citriformis (strain PCC 7424) (Cyanothece sp. (strain PCC 7424)).